Consider the following 602-residue polypeptide: Protein nessun dorma (602 aa).

Positions 188 to 208 (AEAKYIQQRLDYLELDLSDAE) form a coiled coil.

In terms of assembly, interacts (via N-terminus) with both members of the centralspindlin complex, Pav and Tum. Detected in testis (at protein level). Also expressed in ovary.

It localises to the midbody. Functionally, required during male meiosis for completion of spermatocyte cytokinesis and possibly also required in female germline cells. Also involved in ring canal formation in male and female germline cells. Not essential for cleavage furrow ingression but is required for contractile ring stability and the attachment of the furrowing membrane to the actomyosin ring in late telophase. Displays high binding affinity for beta-galactosides. The chain is Protein nessun dorma from Drosophila melanogaster (Fruit fly).